A 90-amino-acid chain; its full sequence is MNKSELIDAIAASADLPKAAAGRALDAVIESVTGALKAGDSVVLVGFGTFSVTDRPARIGRNPQTGKTLEIAAAKKPGFKAGKALKEAVN.

It belongs to the bacterial histone-like protein family. Heterodimer of an alpha and a beta chain.

Its function is as follows. Histone-like DNA-binding protein which is capable of wrapping DNA to stabilize it, and thus to prevent its denaturation under extreme environmental conditions. The polypeptide is DNA-binding protein HU-beta (hupB) (Pseudomonas fluorescens (strain ATCC BAA-477 / NRRL B-23932 / Pf-5)).